The following is a 432-amino-acid chain: PC-esterase domain-containing protein 1B (432 aa).

Disordered regions lie at residues 273–312 (WESS…SPGL) and 407–432 (GPYM…SRPQ). The segment covering 285–294 (QDNIGPQFAQ) has biased composition (polar residues). The span at 296–312 (PPYPFPRPPPLLPSPGL) shows a compositional bias: pro residues.

The protein belongs to the PC-esterase family.

This Rattus norvegicus (Rat) protein is PC-esterase domain-containing protein 1B (Pced1b).